The primary structure comprises 279 residues: Dehydrogenase/reductase SDR family member 4 (279 aa).

L37–V61 lines the NADP(+) pocket. Position 93 is an N6-acetyllysine; alternate (K93). K93 is modified (N6-succinyllysine; alternate). K106 carries the N6-acetyllysine modification. S170 contributes to the substrate binding site. Catalysis depends on Y183, which acts as the Proton acceptor. K187 serves as a coordination point for NADP(+). Phosphoserine is present on S221. N6-succinyllysine is present on K235. The short motif at S277–L279 is the Peroxisomal targeting signal element.

The protein belongs to the short-chain dehydrogenases/reductases (SDR) family. As to quaternary structure, homotetramer.

Its subcellular location is the peroxisome. It catalyses the reaction a secondary alcohol + NADP(+) = a ketone + NADPH + H(+). The enzyme catalyses 3alpha-hydroxy-5beta-pregnan-20-one + NADP(+) = 5beta-pregnan-3,20-dione + NADPH + H(+). The catalysed reaction is 5beta-dihydrotestosterone + NADPH + H(+) = 5beta-androstane-3alpha,17beta-diol + NADP(+). It carries out the reaction all-trans-retinol + NADP(+) = all-trans-retinal + NADPH + H(+). It catalyses the reaction isatin + NADPH + H(+) = 3-hydroxyindolin-2-one + NADP(+). Its function is as follows. NADPH-dependent oxidoreductase which catalyzes the reduction of a variety of compounds bearing carbonyl groups including ketosteroids, alpha-dicarbonyl compounds, aldehydes, aromatic ketones and quinones. Reduces all-trans-retinal and 9-cis retinal. Reduces 3-ketosteroids and benzil into 3alpha-hydroxysteroids and S-benzoin, respectively, in contrast to the stereoselectivity of primates DHRS4s which produce 3beta-hydroxysteroids and R-benzoin. In the reverse reaction, catalyzes the NADP-dependent oxidation of 3alpha-hydroxysteroids and alcohol, but with much lower efficiency. Involved in the metabolism of 3alpha-hydroxysteroids, retinoid, isatin and xenobiotic carbonyl compounds. This is Dehydrogenase/reductase SDR family member 4 (DHRS4) from Bos taurus (Bovine).